The sequence spans 256 residues: Calsenilin (256 aa).

The interval 1 to 22 (MQRTKEAVKASDGNLLGDPGRI) is disordered. K26 participates in a covalent cross-link: Glycyl lysine isopeptide (Lys-Gly) (interchain with G-Cter in SUMO1). S-palmitoyl cysteine attachment occurs at residues C45 and C46. S60 and S63 each carry phosphoserine. The EF-hand 1; degenerate domain maps to 67 to 123 (LELSTVRHQPEGLDQLQAQTKFTKKELQSLYRGFKNECPTGLVDEDTFKLIYSQFFP). A Glycyl lysine isopeptide (Lys-Gly) (interchain with G-Cter in SUMO1) cross-link involves residue K90. 3 consecutive EF-hand domains span residues 126-161 (DATT…LLRG), 162-197 (TVHE…IYDM), and 210-245 (APLE…DENI). D175, N177, D179, C181, E186, D223, N225, D227, and E234 together coordinate Ca(2+). The interaction with KCND2 stretch occupies residues 243-256 (ENIMNSMQLFENVI).

Belongs to the recoverin family. Binds to DNA as a homomultimer. Dimerization is induced by binding to calcium. Interacts with the C-terminus of PSEN1 and PSEN2 and with PSEN2 CTF subunit. Associates with KCN1. Component of heteromultimeric potassium channels. Identified in potassium channel complexes containing KCND1, KCND2, KCND3, KCNIP1, KCNIP2, KCNIP3, KCNIP4, DPP6 and DPP10. Interacts with KCND2 and KCND3. Palmitoylated. Palmitoylation enhances association with the plasma membrane. Post-translationally, proteolytically cleaved by caspase-3. Highly expressed in brain. Isoform 1 or isoform 4 (T+ forms) are expressed at equal levels with isoform 2 or isoform 3 (T- forms). Primarily detected in the layer V and deep layer VI of the cerebral cortex, the hippocampus, and the entire cerebellum. Expressed at low levels in testis. Also expressed in heart.

Its subcellular location is the cytoplasm. It localises to the cell membrane. The protein localises to the endoplasmic reticulum. It is found in the golgi apparatus. The protein resides in the nucleus. Functionally, calcium-dependent transcriptional repressor that binds to the DRE element of genes including PDYN and FOS. Affinity for DNA is reduced upon binding to calcium and enhanced by binding to magnesium. Seems to be involved in nociception. Regulatory subunit of Kv4/D (Shal)-type voltage-gated rapidly inactivating A-type potassium channels, such as KCND2/Kv4.2 and KCND3/Kv4.3. Modulates channel expression at the cell membrane, gating characteristics, inactivation kinetics and rate of recovery from inactivation in a calcium-dependent and isoform-specific manner. Its function is as follows. May play a role in the regulation of PSEN2 proteolytic processing and apoptosis. Together with PSEN2 involved in modulation of amyloid-beta formation. The polypeptide is Calsenilin (Kcnip3) (Mus musculus (Mouse)).